The following is a 3412-amino-acid chain: Genome polyprotein (3412 aa).

The interval 1–30 (MAGKAILKGKGGGPPRRVSKETAKKTRQSR) is disordered. Topologically, residues 1-98 (MAGKAILKGK…LQRRGKRRSA (98 aa)) are cytoplasmic. Positions 97-117 (SAVDWTGWLLVVVLLGVTLAA) are cleaved as a propeptide — ER anchor for the capsid protein C, removed in mature form by serine protease NS3. The helical transmembrane segment at 99 to 119 (VDWTGWLLVVVLLGVTLAATV) threads the bilayer. Residues 120 to 242 (RKERDGTTVI…HLTRVEGWVW (123 aa)) are Extracellular-facing. An N-linked (GlcNAc...) asparagine; by host glycan is attached at Asn144. Residues 243-260 (KNKVLTLAVIAVVWLTVE) form a helical membrane-spanning segment. Position 261 (Ser261) is a topological domain, cytoplasmic. Residues 262 to 280 (VVTRVAVVVVLLCLAPVYA) traverse the membrane as a helical segment. The Extracellular segment spans residues 281–727 (SRCTHLENRD…HTVLGGAFNS (447 aa)). Disulfide bonds link Cys283-Cys310, Cys340-Cys396, Cys340-Cys401, Cys354-Cys385, Cys372-Cys396, and Cys372-Cys401. Positions 378–391 (DRGWGNHCGLFGKG) are fusion peptide. An N-linked (GlcNAc...) asparagine; by host glycan is attached at Asn434. Cystine bridges form between Cys466–Cys570 and Cys587–Cys618. Residues 728-748 (LFGGVGFLPKILVGVVLAWLG) traverse the membrane as a helical segment. Topologically, residues 749–755 (LNMRNPT) are cytoplasmic. Residues 756-776 (MSMSFLLAGGLVLAMTLGVGA) traverse the membrane as a helical segment. Residues 777–1187 (DVGCAVDTER…LVKIESLVRY (411 aa)) are Extracellular-facing. Cystine bridges form between Cys780–Cys791, Cys831–Cys920, Cys955–Cys1000, Cys1057–Cys1106, Cys1068–Cys1090, and Cys1089–Cys1093. 3 N-linked (GlcNAc...) asparagine; by host glycosylation sites follow: Asn861, Asn983, and Asn999. Residues 1188 to 1208 (VVAVGITFHLELGPEIVALTL) traverse the membrane as a helical segment. Over 1209-1236 (LQAVFELRVGLLSAFALRSNLTVREMVT) the chain is Cytoplasmic. Residues 1237-1257 (IYFLLLVLELGLPSEGLGALW) traverse the membrane as a helical segment. Residues 1258–1293 (KWGDALAMGALIFRACTAEEKTGVGLLLMALMTQQD) are Lumenal-facing. A helical transmembrane segment spans residues 1294-1314 (LATVHYGLMLFLGVASCCSIW). Topologically, residues 1315–1327 (KLIRGHREQKGLT) are cytoplasmic. Residues 1328-1348 (WIVPLAGLLGGEGSGVRLVAF) traverse the membrane as a helical segment. At 1349–1359 (WELTVHGRRRS) the chain is on the cytoplasmic side. A helical membrane pass occupies residues 1360–1378 (FSEPLTVVGVMLTLASGMI). Over 1379-1382 (RHTS) the chain is Lumenal. The chain crosses the membrane as a helical span at residues 1383–1403 (QEALCALAVASFLLLMLVLGT). Residues 1404-1454 (RKMQLVAEWSGCVEWHPELMNEGGEVSLRVRQDSMGNFHLTELEKEERVMA) lie on the Cytoplasmic side of the membrane. An interacts with and activates NS3 protease region spans residues 1410–1449 (AEWSGCVEWHPELMNEGGEVSLRVRQDSMGNFHLTELEKE). Residues 1455-1475 (FWLLAGLAASAFHWSGILGVM) constitute an intramembrane region (helical). Residues 1476-2160 (GLWTLSEMLR…KMAERDAPEA (685 aa)) lie on the Cytoplasmic side of the membrane. Positions 1490–1669 (SGLVFSGQGG…EAEKSRPNLP (180 aa)) constitute a Peptidase S7 domain. Catalysis depends on charge relay system; for serine protease NS3 activity residues His1543, Asp1567, and Ser1627. Residues 1675 to 1831 (TGWTAKGQIT…ESNGAISSEE (157 aa)) form the Helicase ATP-binding domain. 1688–1695 (MHPGSGKT) lines the ATP pocket. The DEAH box motif lies at 1779–1782 (DEAH). A Helicase C-terminal domain is found at 1841–2000 (DGFDWITEYE…TLRGPVATFY (160 aa)). Lys1883 carries the post-translational modification N6-acetyllysine; by host. The helical transmembrane segment at 2161-2181 (FLTVVEMMVLGLATLGVVWCF) threads the bilayer. Over 2182-2189 (VVRTSISR) the chain is Lumenal. The segment at residues 2190 to 2210 (MMLGTLVLLASLALLWAGGVS) is an intramembrane region (helical). Tyr2211 is a topological domain (lumenal). The helical transmembrane segment at 2212-2232 (GNMAGVALIFYTLLTVLQPEA) threads the bilayer. At 2233–2244 (GKQRSSDDNKLA) the chain is on the cytoplasmic side. Residues 2245–2265 (YFLLTLCSLAGLVAANEMGFL) form a helical membrane-spanning segment. The Lumenal segment spans residues 2266–2299 (EKTKADLSTVLWSEHEELRSWEEWTNIDIQPARS). Residues 2300-2320 (WGTYVLVVSLFTPYIIHQLQT) constitute an intramembrane region (helical). Over 2321–2343 (KIQQLVNSAVATGAQAMRDLGGG) the chain is Lumenal. The segment at residues 2344–2364 (APFFGVAGHVMALGVVSLVGA) is an intramembrane region (helical). Over 2365-2368 (TPTS) the chain is Lumenal. The chain crosses the membrane as a helical span at residues 2369–2389 (LVVGVGLAAFHLAIVVSGLEA). Over 2390–2430 (ELTQRAHKVFFSAMVRNPMVDGDVINPFGEGEAKPALYERK) the chain is Cytoplasmic. The chain crosses the membrane as a helical span at residues 2431 to 2451 (MSLVLAIVLCLMSVVMNRTVP). The Lumenal portion of the chain corresponds to 2452–2476 (STPRLLLWDWRQRDNCSNQRRTPFG). The chain crosses the membrane as a helical span at residues 2477–2497 (RCQACGLSGVVRGSLWGFCPL). At 2498–3412 (GHRLWLRASG…WESKLESSII (915 aa)) the chain is on the cytoplasmic side. In terms of domain architecture, mRNA cap 0-1 NS5-type MT spans 2511-2775 (GGSEGDTLGD…ELDLGVGTRC (265 aa)). Position 2566 (Ser2566) interacts with S-adenosyl-L-methionine. Ser2566 is subject to Phosphoserine. The active-site For 2'-O-MTase activity is Lys2571. Positions 2596, 2597, 2615, 2641, and 2642 each coordinate S-adenosyl-L-methionine. Asp2656 functions as the For 2'-O-MTase activity in the catalytic mechanism. Ile2657 is an S-adenosyl-L-methionine binding site. Active-site for 2'-O-MTase activity residues include Lys2693 and Glu2729. The tract at residues 2729–2733 (EMYYS) is interaction with host SCRIB. Tyr2731 is an S-adenosyl-L-methionine binding site. Residues Glu2948, His2952, Cys2957, and Cys2960 each contribute to the Zn(2+) site. The RdRp catalytic domain maps to 3038-3187 (GLFYADDTAG…RPVDDRFSGA (150 aa)). Residues His3222, Cys3238, and Cys3357 each contribute to the Zn(2+) site.

The protein in the N-terminal section; belongs to the class I-like SAM-binding methyltransferase superfamily. mRNA cap 0-1 NS5-type methyltransferase family. Homodimer. Interacts (via N-terminus) with host EXOC1 (via C-terminus); this interaction results in EXOC1 degradation through the proteasome degradation pathway. As to quaternary structure, forms heterodimers with envelope protein E in the endoplasmic reticulum and Golgi. In terms of assembly, homodimer; in the endoplasmic reticulum and Golgi. Interacts with protein prM. Interacts with non-structural protein 1. Homodimer; Homohexamer when secreted. Interacts with envelope protein E. As to quaternary structure, interacts (via N-terminus) with serine protease NS3. In terms of assembly, forms a heterodimer with serine protease NS3. May form homooligomers. Forms a heterodimer with NS2B. Interacts with non-structural protein 2A (via N-terminus). Interacts with NS4B. Interacts with unphosphorylated RNA-directed RNA polymerase NS5; this interaction stimulates RNA-directed RNA polymerase NS5 guanylyltransferase activity. As to quaternary structure, interacts with serine protease NS3. Interacts with NS1. In terms of assembly, homodimer. Interacts with host STAT2; this interaction inhibits the phosphorylation of the latter, and, when all viral proteins are present (polyprotein), targets STAT2 for degradation. Interacts with serine protease NS3. Interacts with host SCRIB; this interaction targets NS5 to the cell membrane periphery and nucleus, thereby allowing efficient host nuclear STAT1 inhibition. Specific enzymatic cleavages in vivo yield mature proteins. Cleavages in the lumen of endoplasmic reticulum are performed by host signal peptidase, whereas cleavages in the cytoplasmic side are performed by serine protease NS3. Signal cleavage at the 2K-4B site requires a prior NS3 protease-mediated cleavage at the 4A-2K site. In terms of processing, cleaved in post-Golgi vesicles by a host furin, releasing the mature small envelope protein M, and peptide pr. This cleavage is incomplete as up to 30% of viral particles still carry uncleaved prM. Post-translationally, N-glycosylated. N-glycosylated. The excreted form is glycosylated and this is required for efficient secretion of the protein from infected cells. In terms of processing, acetylated by host KAT5. Acetylation modulates NS3 RNA-binding and unwinding activities and plays an important positive role for viral replication. Post-translationally, phosphorylated on serines residues. This phosphorylation may trigger NS5 nuclear localization.

The protein localises to the virion. Its subcellular location is the host nucleus. It localises to the host cytoplasm. It is found in the host perinuclear region. The protein resides in the secreted. The protein localises to the virion membrane. Its subcellular location is the host endoplasmic reticulum membrane. The enzyme catalyses Selective hydrolysis of -Xaa-Xaa-|-Yaa- bonds in which each of the Xaa can be either Arg or Lys and Yaa can be either Ser or Ala.. It carries out the reaction RNA(n) + a ribonucleoside 5'-triphosphate = RNA(n+1) + diphosphate. It catalyses the reaction a ribonucleoside 5'-triphosphate + H2O = a ribonucleoside 5'-diphosphate + phosphate + H(+). The catalysed reaction is ATP + H2O = ADP + phosphate + H(+). The enzyme catalyses a 5'-end (5'-triphosphoguanosine)-ribonucleoside in mRNA + S-adenosyl-L-methionine = a 5'-end (N(7)-methyl 5'-triphosphoguanosine)-ribonucleoside in mRNA + S-adenosyl-L-homocysteine. It carries out the reaction a 5'-end (N(7)-methyl 5'-triphosphoguanosine)-ribonucleoside in mRNA + S-adenosyl-L-methionine = a 5'-end (N(7)-methyl 5'-triphosphoguanosine)-(2'-O-methyl-ribonucleoside) in mRNA + S-adenosyl-L-homocysteine + H(+). Plays a role in virus budding by binding to the cell membrane and gathering the viral RNA into a nucleocapsid that forms the core of a mature virus particle. During virus entry, may induce genome penetration into the host cytoplasm after hemifusion induced by the surface proteins. Can migrate to the cell nucleus where it modulates host functions. Functionally, inhibits RNA silencing by interfering with host Dicer. In terms of biological role, prevents premature fusion activity of envelope proteins in trans-Golgi by binding to envelope protein E at pH6.0. After virion release in extracellular space, gets dissociated from E dimers. Its function is as follows. Acts as a chaperone for envelope protein E during intracellular virion assembly by masking and inactivating envelope protein E fusion peptide. prM is the only viral peptide matured by host furin in the trans-Golgi network probably to avoid catastrophic activation of the viral fusion activity in acidic Golgi compartment prior to virion release. prM-E cleavage is inefficient, and many virions are only partially matured. These uncleaved prM would play a role in immune evasion. May play a role in virus budding. Exerts cytotoxic effects by activating a mitochondrial apoptotic pathway through M ectodomain. May display a viroporin activity. Functionally, binds to host cell surface receptor and mediates fusion between viral and cellular membranes. Envelope protein is synthesized in the endoplasmic reticulum in the form of heterodimer with protein prM. They play a role in virion budding in the ER, and the newly formed immature particle is covered with 60 spikes composed of heterodimer between precursor prM and envelope protein E. The virion is transported to the Golgi apparatus where the low pH causes dissociation of PrM-E heterodimers and formation of E homodimers. prM-E cleavage is inefficient, and many virions are only partially matured. These uncleaved prM would play a role in immune evasion. In terms of biological role, involved in immune evasion, pathogenesis and viral replication. Once cleaved off the polyprotein, is targeted to three destinations: the viral replication cycle, the plasma membrane and the extracellular compartment. Essential for viral replication. Required for formation of the replication complex and recruitment of other non-structural proteins to the ER-derived membrane structures. Excreted as a hexameric lipoparticle that plays a role against host immune response. Antagonizing the complement function. Binds to the host macrophages and dendritic cells. Inhibits signal transduction originating from Toll-like receptor 3 (TLR3). Its function is as follows. Component of the viral RNA replication complex that functions in virion assembly and antagonizes the host immune response. Required cofactor for the serine protease function of NS3. May have membrane-destabilizing activity and form viroporins. Functionally, displays three enzymatic activities: serine protease, NTPase and RNA helicase. NS3 serine protease, in association with NS2B, performs its autocleavage and cleaves the polyprotein at dibasic sites in the cytoplasm: C-prM, NS2A-NS2B, NS2B-NS3, NS3-NS4A, NS4A-2K and NS4B-NS5. NS3 RNA helicase binds RNA and unwinds dsRNA in the 3' to 5' direction. In terms of biological role, regulates the ATPase activity of the NS3 helicase activity. NS4A allows NS3 helicase to conserve energy during unwinding. Its function is as follows. Functions as a signal peptide for NS4B and is required for the interferon antagonism activity of the latter. Induces the formation of ER-derived membrane vesicles where the viral replication takes place. Inhibits interferon (IFN)-induced host STAT1 phosphorylation and nuclear translocation, thereby preventing the establishment of cellular antiviral state by blocking the IFN-alpha/beta pathway. Inhibits STAT2 translocation in the nucleus after IFN-alpha treatment. Functionally, replicates the viral (+) and (-) genome, and performs the capping of genomes in the cytoplasm. NS5 methylates viral RNA cap at guanine N-7 and ribose 2'-O positions. Besides its role in RNA genome replication, also prevents the establishment of cellular antiviral state by blocking the interferon-alpha/beta (IFN-alpha/beta) signaling pathway. Inhibits host TYK2 and STAT2 phosphorylation, thereby preventing activation of JAK-STAT signaling pathway. The sequence is that of Genome polyprotein from Homo sapiens (Human).